A 122-amino-acid chain; its full sequence is EPIDERMAL PATTERNING FACTOR-like protein 1 (122 aa).

The N-terminal stretch at 1–26 (MFAIYKSTLLLLPLILILLITPQVSS) is a signal peptide. Cystine bridges form between C55-C113, C59-C65, and C62-C115.

This sequence belongs to the plant cysteine rich small secretory peptide family. Epidermal patterning factor subfamily.

The protein resides in the secreted. Its function is as follows. Controls stomatal patterning. This chain is EPIDERMAL PATTERNING FACTOR-like protein 1, found in Arabidopsis thaliana (Mouse-ear cress).